Consider the following 88-residue polypeptide: Small ribosomal subunit protein bS20 (88 aa).

The protein belongs to the bacterial ribosomal protein bS20 family.

In terms of biological role, binds directly to 16S ribosomal RNA. The chain is Small ribosomal subunit protein bS20 from Syntrophomonas wolfei subsp. wolfei (strain DSM 2245B / Goettingen).